The primary structure comprises 177 residues: UPF0177 protein YxdF (177 aa).

4 helical membrane-spanning segments follow: residues 2 to 22, 30 to 50, 117 to 137, and 152 to 172; these read TLVL…KNTL, IFWL…VTVL, ALVH…SFII, and IVHS…DTFF.

Belongs to the UPF0177 family.

It is found in the cell membrane. The polypeptide is UPF0177 protein YxdF (yxdF) (Lactococcus lactis subsp. lactis (strain IL1403) (Streptococcus lactis)).